The sequence spans 582 residues: Putative G-protein coupled receptor B0244.10 (582 aa).

Helical transmembrane passes span 25-45, 70-90, 120-140, and 159-179; these read LYII…PLGL, ITFS…GFAV, WTFF…GLVI, and LLVQ…VFLT. The N-linked (GlcNAc...) asparagine glycan is linked to N190. A helical membrane pass occupies residues 199 to 218; that stretch reads LTLGKWFIALYRFLFQMTNI. N-linked (GlcNAc...) asparagine glycosylation is found at N221 and N237. 5 helical membrane passes run 253 to 273, 296 to 316, 329 to 349, 377 to 397, and 421 to 441; these read SLMI…AVLV, YIFV…IIII, TFAF…SLLG, IYII…PFGL, and WLLF…LLFV. An N-linked (GlcNAc...) asparagine glycan is attached at N457. 2 consecutive transmembrane segments (helical) span residues 475–495 and 513–533; these read TILV…AAFG and LIFP…TFLL. N538 carries an N-linked (GlcNAc...) asparagine glycan.

This sequence belongs to the G-protein coupled receptor 1 family. B0244 subfamily.

It is found in the cell membrane. In Caenorhabditis elegans, this protein is Putative G-protein coupled receptor B0244.10.